A 308-amino-acid polypeptide reads, in one-letter code: tRNA dimethylallyltransferase (308 aa).

Residue 14–21 (GPTASGKT) participates in ATP binding. 16–21 (TASGKT) lines the substrate pocket. 3 interaction with substrate tRNA regions span residues 39–42 (DSAL), 163–167 (QRLSR), and 244–249 (RCVGYR).

Belongs to the IPP transferase family. As to quaternary structure, monomer. Mg(2+) is required as a cofactor.

The enzyme catalyses adenosine(37) in tRNA + dimethylallyl diphosphate = N(6)-dimethylallyladenosine(37) in tRNA + diphosphate. In terms of biological role, catalyzes the transfer of a dimethylallyl group onto the adenine at position 37 in tRNAs that read codons beginning with uridine, leading to the formation of N6-(dimethylallyl)adenosine (i(6)A). The protein is tRNA dimethylallyltransferase of Shewanella oneidensis (strain ATCC 700550 / JCM 31522 / CIP 106686 / LMG 19005 / NCIMB 14063 / MR-1).